We begin with the raw amino-acid sequence, 280 residues long: Dimethylglycine N-methyltransferase (280 aa).

The protein belongs to the methyltransferase superfamily. As to quaternary structure, monomer.

The catalysed reaction is N,N-dimethylglycine + S-adenosyl-L-methionine = glycine betaine + S-adenosyl-L-homocysteine + H(+). The protein operates within amine and polyamine biosynthesis; betaine biosynthesis via glycine pathway; betaine from glycine: step 3/3. Catalyzes the methylation of dimethylglycine to betaine with S-adenosylmethionine (AdoMet) acting as the methyl donor. It has strict specificity for dimethylglycine as the methyl group acceptors. This chain is Dimethylglycine N-methyltransferase, found in Parasynechococcus marenigrum (strain WH8102).